The following is a 432-amino-acid chain: Protein RETICULATA, chloroplastic (432 aa).

The transit peptide at 1-47 (MAGCAMNLQFSSVVKVRNEISSFGICNRDFVFRDLAKAMKVPVLRIR) directs the protein to the chloroplast. A disordered region spans residues 109–140 (GNVGDGFNGSDGNGGGGGGGNGGEGDGEGEDY). A compositionally biased stretch (gly residues) spans 111–132 (VGDGFNGSDGNGGGGGGGNGGE). The next 2 membrane-spanning stretches (helical) occupy residues 249-269 (LYVADLLVGTVVNIALVGMLA) and 322-342 (IMYGAVGFGCGIVGQGIANLI).

It belongs to the RETICULATA family. Highly expressed in the vasculature of developing leaf primordia, margins of fully expanded leaves, hydathodes of rosette of cauline leaves, basal region of the lamina, stipules, root tips, stamens and in the abscission zone of the funiculus.

The protein resides in the plastid. The protein localises to the chloroplast membrane. Its function is as follows. May play a role in leaf development. Required for leaf mesophyll cell division in the early stages of leaf organogenesis. Acts in a developmental pathway that involves PPT1/CUE1 but does not include ASE2/DOV1. The sequence is that of Protein RETICULATA, chloroplastic from Arabidopsis thaliana (Mouse-ear cress).